The sequence spans 842 residues: MutS protein homolog him-14 (842 aa).

The segment at 1–21 (MYSNKSFQRRQRQQVAESRSE) is disordered. 588-595 (GPNMAGKS) lines the ATP pocket.

Belongs to the DNA mismatch repair MutS family. As to quaternary structure, heterooligomer of him-14 and msh-5.

The protein resides in the nucleus. Required during the pachytene stage of meiotic prophase for the formation of crossovers between homologous chromosomes. Together with msh-5 and zhp-3 plays a role in the activation of DNA damage-dependent apoptosis at the DNA damage checkpoint in pachytene cells. Not needed for pairing or synapsis. May promote crossing over by interfering with Holliday junction branch migration. Has no apparent role in DNA mismatch repair. The sequence is that of MutS protein homolog him-14 from Caenorhabditis elegans.